The chain runs to 678 residues: DNA ligase (678 aa).

Residues 36-40 (DAEYD), 85-86 (SL), and Glu-117 contribute to the NAD(+) site. Catalysis depends on Lys-119, which acts as the N6-AMP-lysine intermediate. Residues Arg-140, Glu-177, Lys-294, and Lys-318 each coordinate NAD(+). Residues Cys-412, Cys-415, Cys-430, and Cys-436 each contribute to the Zn(2+) site. One can recognise a BRCT domain in the interval 595–678 (ADEQPLNGQT…NLLREHGIEV (84 aa)).

The protein belongs to the NAD-dependent DNA ligase family. LigA subfamily. Requires Mg(2+) as cofactor. It depends on Mn(2+) as a cofactor.

The catalysed reaction is NAD(+) + (deoxyribonucleotide)n-3'-hydroxyl + 5'-phospho-(deoxyribonucleotide)m = (deoxyribonucleotide)n+m + AMP + beta-nicotinamide D-nucleotide.. Functionally, DNA ligase that catalyzes the formation of phosphodiester linkages between 5'-phosphoryl and 3'-hydroxyl groups in double-stranded DNA using NAD as a coenzyme and as the energy source for the reaction. It is essential for DNA replication and repair of damaged DNA. The chain is DNA ligase from Marinobacter nauticus (strain ATCC 700491 / DSM 11845 / VT8) (Marinobacter aquaeolei).